A 430-amino-acid polypeptide reads, in one-letter code: Serine--tRNA ligase (430 aa).

L-serine is bound at residue 236–238; that stretch reads TAE. Residue 267-269 participates in ATP binding; sequence RSE. E290 provides a ligand contact to L-serine. 354–357 is an ATP binding site; it reads EISS. S390 lines the L-serine pocket.

The protein belongs to the class-II aminoacyl-tRNA synthetase family. Type-1 seryl-tRNA synthetase subfamily. Homodimer. The tRNA molecule binds across the dimer.

The protein localises to the cytoplasm. The catalysed reaction is tRNA(Ser) + L-serine + ATP = L-seryl-tRNA(Ser) + AMP + diphosphate + H(+). It catalyses the reaction tRNA(Sec) + L-serine + ATP = L-seryl-tRNA(Sec) + AMP + diphosphate + H(+). Its pathway is aminoacyl-tRNA biosynthesis; selenocysteinyl-tRNA(Sec) biosynthesis; L-seryl-tRNA(Sec) from L-serine and tRNA(Sec): step 1/1. Functionally, catalyzes the attachment of serine to tRNA(Ser). Is also able to aminoacylate tRNA(Sec) with serine, to form the misacylated tRNA L-seryl-tRNA(Sec), which will be further converted into selenocysteinyl-tRNA(Sec). In Mannheimia succiniciproducens (strain KCTC 0769BP / MBEL55E), this protein is Serine--tRNA ligase.